The primary structure comprises 1611 residues: Pentafunctional AROM polypeptide (1611 aa).

Residues 1–406 are 3-dehydroquinate synthase; sequence MSQVSGGKVP…VEERASTVSD (406 aa). Residues 64–66, 97–100, 128–130, and Asp133 each bind NAD(+); these read DTN, EESK, and GGV. Arg144 is a 7-phospho-2-dehydro-3-deoxy-D-arabino-heptonate binding site. 153–154 lines the NAD(+) pocket; sequence TT. Asp160 and Lys166 together coordinate 7-phospho-2-dehydro-3-deoxy-D-arabino-heptonate. Residue Lys175 participates in NAD(+) binding. A 7-phospho-2-dehydro-3-deoxy-D-arabino-heptonate-binding site is contributed by Asn176. Residues 193-196 and Asn204 contribute to the NAD(+) site; that span reads WLLT. Residue Glu208 coordinates Zn(2+). 7-phospho-2-dehydro-3-deoxy-D-arabino-heptonate-binding positions include 208–211 and Lys272; that span reads EVIK. Catalysis depends on Glu282, which acts as the Proton acceptor; for 3-dehydroquinate synthase activity. Residues 286-290 and His293 contribute to the 7-phospho-2-dehydro-3-deoxy-D-arabino-heptonate site; that span reads RNLVN. A Zn(2+)-binding site is contributed by His293. His297 serves as the catalytic Proton acceptor; for 3-dehydroquinate synthase activity. His309 and Lys378 together coordinate 7-phospho-2-dehydro-3-deoxy-D-arabino-heptonate. His309 is a Zn(2+) binding site. The tract at residues 419-882 is EPSP synthase; sequence VRESVSAPRP…WDVLGGPLNV (464 aa). Cys864 functions as the For EPSP synthase activity in the catalytic mechanism. Residues 915–1092 form a shikimate kinase region; sequence DASIVLIGMR…VPISPAFFLS (178 aa). 922–929 serves as a coordination point for ATP; sequence GMRASGKS. Residues 1093–1309 form a 3-dehydroquinase region; the sequence is LTFPRVQDAW…AAPGQMSVRD (217 aa). Catalysis depends on His1212, which acts as the Proton acceptor; for 3-dehydroquinate dehydratase activity. Lys1240 functions as the Schiff-base intermediate with substrate; for 3-dehydroquinate dehydratase activity in the catalytic mechanism. Positions 1322–1611 are shikimate dehydrogenase; that stretch reads KRHFFLFGSP…AAYRAAAASM (290 aa).

The protein in the N-terminal section; belongs to the sugar phosphate cyclases superfamily. Dehydroquinate synthase family. It in the 2nd section; belongs to the EPSP synthase family. In the 3rd section; belongs to the shikimate kinase family. This sequence in the 4th section; belongs to the type-I 3-dehydroquinase family. The protein in the C-terminal section; belongs to the shikimate dehydrogenase family. As to quaternary structure, homodimer. The cofactor is Zn(2+).

The protein resides in the cytoplasm. It carries out the reaction 7-phospho-2-dehydro-3-deoxy-D-arabino-heptonate = 3-dehydroquinate + phosphate. The catalysed reaction is 3-dehydroquinate = 3-dehydroshikimate + H2O. It catalyses the reaction shikimate + NADP(+) = 3-dehydroshikimate + NADPH + H(+). The enzyme catalyses shikimate + ATP = 3-phosphoshikimate + ADP + H(+). It carries out the reaction 3-phosphoshikimate + phosphoenolpyruvate = 5-O-(1-carboxyvinyl)-3-phosphoshikimate + phosphate. Its pathway is metabolic intermediate biosynthesis; chorismate biosynthesis; chorismate from D-erythrose 4-phosphate and phosphoenolpyruvate: step 2/7. It functions in the pathway metabolic intermediate biosynthesis; chorismate biosynthesis; chorismate from D-erythrose 4-phosphate and phosphoenolpyruvate: step 3/7. The protein operates within metabolic intermediate biosynthesis; chorismate biosynthesis; chorismate from D-erythrose 4-phosphate and phosphoenolpyruvate: step 4/7. It participates in metabolic intermediate biosynthesis; chorismate biosynthesis; chorismate from D-erythrose 4-phosphate and phosphoenolpyruvate: step 5/7. Its pathway is metabolic intermediate biosynthesis; chorismate biosynthesis; chorismate from D-erythrose 4-phosphate and phosphoenolpyruvate: step 6/7. Its function is as follows. The AROM polypeptide catalyzes 5 consecutive enzymatic reactions in prechorismate polyaromatic amino acid biosynthesis. The sequence is that of Pentafunctional AROM polypeptide from Malassezia globosa (strain ATCC MYA-4612 / CBS 7966) (Dandruff-associated fungus).